We begin with the raw amino-acid sequence, 906 residues long: Protein translocase subunit SecA (906 aa).

Residues Gln89, 107 to 111 (GEGKT), and Asp502 contribute to the ATP site. The tract at residues 868–887 (VPPAQRDPADPRTWGKVSRN) is disordered. The Zn(2+) site is built by Cys890, Cys892, Cys901, and His902.

The protein belongs to the SecA family. As to quaternary structure, monomer and homodimer. Part of the essential Sec protein translocation apparatus which comprises SecA, SecYEG and auxiliary proteins SecDF-YajC and YidC. Zn(2+) is required as a cofactor.

Its subcellular location is the cell inner membrane. The protein localises to the cytoplasm. The catalysed reaction is ATP + H2O + cellular proteinSide 1 = ADP + phosphate + cellular proteinSide 2.. Part of the Sec protein translocase complex. Interacts with the SecYEG preprotein conducting channel. Has a central role in coupling the hydrolysis of ATP to the transfer of proteins into and across the cell membrane, serving both as a receptor for the preprotein-SecB complex and as an ATP-driven molecular motor driving the stepwise translocation of polypeptide chains across the membrane. The polypeptide is Protein translocase subunit SecA (Brucella abortus (strain S19)).